Here is a 501-residue protein sequence, read N- to C-terminus: Bifunctional pantoate ligase/cytidylate kinase (501 aa).

Positions 1–264 are pantoate--beta-alanine ligase; the sequence is MLSTQAELAA…CGTTRLIDHS (264 aa). 25 to 32 serves as a coordination point for ATP; it reads MGGLHQGH. Histidine 32 functions as the Proton donor in the catalytic mechanism. Glutamine 55 lines the (R)-pantoate pocket. Residue glutamine 55 participates in beta-alanine binding. An ATP-binding site is contributed by 144-147; it reads GEKD. Glutamine 150 is a (R)-pantoate binding site. ATP contacts are provided by residues valine 173 and 181 to 184; that span reads LSSR. Residues 265–501 form a cytidylate kinase region; that stretch reads FLMTRQPLVA…PEEAWPTPAG (237 aa).

It in the N-terminal section; belongs to the pantothenate synthetase family. The protein in the C-terminal section; belongs to the cytidylate kinase family. Type 1 subfamily.

The protein resides in the cytoplasm. The catalysed reaction is (R)-pantoate + beta-alanine + ATP = (R)-pantothenate + AMP + diphosphate + H(+). It catalyses the reaction CMP + ATP = CDP + ADP. It carries out the reaction dCMP + ATP = dCDP + ADP. Its pathway is cofactor biosynthesis; (R)-pantothenate biosynthesis; (R)-pantothenate from (R)-pantoate and beta-alanine: step 1/1. Functionally, catalyzes the condensation of pantoate with beta-alanine in an ATP-dependent reaction via a pantoyl-adenylate intermediate. Its function is as follows. Catalyzes the transfer of a phosphate group from ATP to either CMP or dCMP to form CDP or dCDP and ADP, respectively. This Parasynechococcus marenigrum (strain WH8102) protein is Bifunctional pantoate ligase/cytidylate kinase.